The following is a 151-amino-acid chain: Ribosomal RNA large subunit methyltransferase H (151 aa).

Residues leucine 70, glycine 99, and 118–123 each bind S-adenosyl-L-methionine; that span reads LSKLTF.

It belongs to the RNA methyltransferase RlmH family. In terms of assembly, homodimer.

Its subcellular location is the cytoplasm. It catalyses the reaction pseudouridine(1915) in 23S rRNA + S-adenosyl-L-methionine = N(3)-methylpseudouridine(1915) in 23S rRNA + S-adenosyl-L-homocysteine + H(+). Specifically methylates the pseudouridine at position 1915 (m3Psi1915) in 23S rRNA. The polypeptide is Ribosomal RNA large subunit methyltransferase H (Gloeobacter violaceus (strain ATCC 29082 / PCC 7421)).